Reading from the N-terminus, the 1818-residue chain is MSYSELYTRYTRVWIPDPDEVWRSAELTKDYKEGDKSLQLRLEDDTILEYPVDVQNNQVPFLRNPDILVGENDLTALSHLHEPAVLHNLKVRFLESNHIYTYCGIVLVAINPYEQLPIYGQDVIYAYSGQNMGDMDPHIFAVAEEAYKQMARDEKNQSIIVSGESGAGKTVSAKYAMRYFATVGGSASDTNIEEKVLASSPIMEAIGNAKTTRNDNSSRFGKFIEIGFDKKYHIIGANMRTYLLEKSRVVFQADDERNYHIFYQLCAAASLPEFKELALTCAEDFFYTAHGGNTTIEGVNDADDFEKTRQALTLLGVRDSHQISIFKIIASILHLGSVEIQSERDGDSCSISPQDEHLSNFCSLLGIEHSQMEHWLCHRKLVTTSETYVKTMSLQQVVNARDALAKHIYAQLFSWIVEHINKALHTSHKQHSFIGVLDIYGFETFEINSFEQFCINYANEKLQQQFNSHVFKLEQEEYMKEQIPWTLIDFYDNQPCIDLIEAKLGILDLLDEECKVPKGTDQNWAQKLYERHSNSQHFQKPRMSNTAFIVNHFADKVEYLSDGFLEKNRDTVYEEQINILKASKFPLVADLFHDDKDSAPATNTAKNRSSSKINVRSSRPLIKVPNKEHKKSVGYQFRTSLNLLMETLNATTPHYVRCIKPNDEKLPFHFDPKRAVQQLRACGVLETIRISAAGYPSRWTYHDFFNRYRVLMKKRELTNTDKKNICKSVLESLIKDPDKFQFGRTKIFFRAGQVAYLEKLRADKFREATIMIQKSVRGWLQRVKYRRLRAATLSLQRFCRGYLARRLAEHLRRTRAAIVFQKQYRMLKARRAYRRVCRATVIIQSFTRAMFVRRNYRQVLMEHKATIIQKYARGWMARKRFLRERDAAIVIQCAFRRLKARQELKALKIEARSAEHLKRLNVGMENKVVQLQRKIDDQNKEFKTLSEQLSAVTSSHAVEVEKLKKELAHYQQNQEADTSLQLQEEVQSLRTELQKAHSERRVLEDAHNKENGELRKRVADLEHENALLKDEKEYLNNQILCQSKAESSQSSVEENLLMKKELEEERSRYQNLVKEYSQLEQRYENLRDEQTPGHRKNPSNQSSLESDSNYPSISTSEIGDTEDALQQVEEIGIEKAAMDMTVFLKLQKRVRELEQERKKLQAQLEKGQQDSKKGQVEQQNNGLDVDQDADIAYNSLKRQELESENKKLKNDLNELRKAVADQAMQDNSTHSSPDSYSLLLNQLKLANEELEVRKEEVLILRTQIMNADQRRLSGKNMEPNINARTSWPNSEKHVDQEDAIEAYHGVCQTNRLLEAQLQAQSLEHEEEVEHLKAQVEALKEEMDKQQQTFCQTLLLSPEAQVEFGVQQEISRLTNENLDFKELVEKLEKNERKLKKQLKIYMKKVQDLEAAQALAQSDRRHHELTRQVTVQRKEKDFQGMLEYHKEDEALLIRNLVTDLKPQMLSGTVPCLPAYILYMCIRHADYTNDDLKVHSLLSSTINGIKKVLKKHNDDFEMTSFWLSNTCRFLHCLKQYSGDEGFMTQNTAKQNEHCLKNFDLTEYRQVLSDLSIQIYQQLIKIAEGLLQPMIVSAMLENESIQGLSGVRPTGYRKRSSSMVDGENSYCLEAIVRQMNSFHTVLCDQGLDPEIILQVFKQLFYMINAVTLNNLLLRKDACSWSTGMQLRYNISQLEEWLRGKNLHQSGAVQTMEPLIQAAQLLQLKKKTHEDAEAICSLCTSLSTQQIVKILNLYTPLNEFEERVTVSFIRTIQAQLQERNDPQQLLLDSKHVFPVLFPYNPSALTMDSIHIPACLNLEFLNEV.

The Myosin N-terminal SH3-like domain occupies 8 to 60 (TRYTRVWIPDPDEVWRSAELTKDYKEGDKSLQLRLEDDTILEYPVDVQNNQVP). Residues 21–40 (VWRSAELTKDYKEGDKSLQL) form a requires for interaction with LIMA1 region. One can recognise a Myosin motor domain in the interval 69 to 762 (VGENDLTALS…QVAYLEKLRA (694 aa)). Position 163–170 (163–170 (GESGAGKT)) interacts with ATP. The actin-binding stretch occupies residues 641 to 663 (LNLLMETLNATTPHYVRCIKPND). 6 IQ domains span residues 765–794 (FREATIMIQKSVRGWLQRVKYRRLRAATLS), 788–817 (LRAATLSLQRFCRGYLARRLAEHLRRTRAA), 813–842 (RTRAAIVFQKQYRMLKARRAYRRVCRATVI), 836–865 (VCRATVIIQSFTRAMFVRRNYRQVLMEHKA), 861–890 (MEHKATIIQKYARGWMARKRFLRERDAAIV), and 884–913 (ERDAAIVIQCAFRRLKARQELKALKIEARS). Disordered stretches follow at residues 1086-1120 (LRDEQTPGHRKNPSNQSSLESDSNYPSISTSEIGD) and 1161-1188 (QAQLEKGQQDSKKGQVEQQNNGLDVDQD). The span at 1098 to 1118 (PSNQSSLESDSNYPSISTSEI) shows a compositional bias: polar residues. 2 coiled-coil regions span residues 1140–1261 (MTVF…LILR) and 1313–1415 (LEAQ…ALAQ). Ser1416 carries the post-translational modification Phosphoserine. A Dilute domain is found at 1496–1773 (SSTINGIKKV…IRTIQAQLQE (278 aa)).

The protein belongs to the TRAFAC class myosin-kinesin ATPase superfamily. Myosin family. Component of the CART complex, at least composed of ACTN4, HGS/HRS, MYO5B and TRIM3. Interacts with RAB11FIP2. Interacts with RAB11A and RAB8A. Found in a complex with CFTR and RAB11A. Interacts with NPC1L1. Interacts with LIMA1.

The protein resides in the cytoplasm. Functionally, may be involved in vesicular trafficking via its association with the CART complex. The CART complex is necessary for efficient transferrin receptor recycling but not for EGFR degradation. Required in a complex with RAB11A and RAB11FIP2 for the transport of NPC1L1 to the plasma membrane. Together with RAB11A participates in CFTR trafficking to the plasma membrane and TF (transferrin) recycling in nonpolarized cells. Together with RAB11A and RAB8A participates in epithelial cell polarization. Together with RAB25 regulates transcytosis. Required for proper localization of bile salt export pump ABCB11 at the apical/canalicular plasma membrane of hepatocytes. The sequence is that of Unconventional myosin-Vb (Myo5b) from Mus musculus (Mouse).